The chain runs to 385 residues: 5'-AMP-activated protein kinase catalytic subunit alpha-1 (385 aa).

Residues 1-229 enclose the Protein kinase domain; it reads DGRVKIGHYI…IKDIREHEWF (229 aa). Thr14 is modified (phosphothreonine). 15–22 lines the ATP pocket; sequence LGVGTFGK. Asp100 acts as the Proton acceptor in catalysis. The residue at position 133 (Thr133) is a Phosphothreonine; by LKB1 and CaMKK2. A phosphothreonine mark is found at Thr219 and Thr276. Positions 252-297 are AIS; the sequence is EALKQDPLAVAYHLIIDNRDFYLATSPPDSFLDDHHLTRVPFLVAE. Position 277 is a phosphoserine (Ser277). Ser281 is modified (phosphoserine; by ULK1). Thr289 carries the phosphothreonine; by ULK1 modification. The residue at position 298 (Thr298) is a Phosphothreonine. Phosphoserine occurs at positions 353 and 383.

This sequence belongs to the protein kinase superfamily. CAMK Ser/Thr protein kinase family. SNF1 subfamily. In terms of assembly, AMPK is a heterotrimer of an alpha catalytic subunit (PRKAA1 or PRKAA2), a beta (PRKAB1 or PRKAB2) and a gamma non-catalytic subunits (PRKAG1, PRKAG2 or PRKAG3). Interacts with FNIP1 and FNIP2. The cofactor is Mg(2+). Ubiquitinated. Post-translationally, phosphorylated at Thr-133 by STK11/LKB1 in complex with STE20-related adapter-alpha (STRADA) pseudo kinase and CAB39. Also phosphorylated at Thr-133 by CAMKK2; triggered by a rise in intracellular calcium ions, without detectable changes in the AMP/ATP ratio. CAMKK1 can also phosphorylate Thr-133, but at a much lower level. Dephosphorylated by protein phosphatase 2A and 2C (PP2A and PP2C). Phosphorylated by ULK1 and ULK2; leading to negatively regulate AMPK activity and suggesting the existence of a regulatory feedback loop between ULK1, ULK2 and AMPK. Dephosphorylated by PPM1A and PPM1B. In terms of processing, glycosylated; O-GlcNAcylated by OGT, promoting the AMP-activated protein kinase (AMPK) activity.

The protein localises to the cytoplasm. Its subcellular location is the nucleus. The catalysed reaction is L-seryl-[protein] + ATP = O-phospho-L-seryl-[protein] + ADP + H(+). It catalyses the reaction L-threonyl-[protein] + ATP = O-phospho-L-threonyl-[protein] + ADP + H(+). The enzyme catalyses L-seryl-[acetyl-CoA carboxylase] + ATP = O-phospho-L-seryl-[acetyl-CoA carboxylase] + ADP + H(+). It carries out the reaction L-seryl-[3-hydroxy-3-methylglutaryl-coenzyme A reductase] + ATP = O-phospho-L-seryl-[3-hydroxy-3-methylglutaryl-coenzyme A reductase] + ADP + H(+). The catalysed reaction is L-seryl-[tau protein] + ATP = O-phospho-L-seryl-[tau protein] + ADP + H(+). It catalyses the reaction L-threonyl-[tau protein] + ATP = O-phospho-L-threonyl-[tau protein] + ADP + H(+). With respect to regulation, activated by phosphorylation on Thr-133. Binding of AMP to non-catalytic gamma subunit (PRKAG1, PRKAG2 or PRKAG3) results in allosteric activation, inducing phosphorylation on Thr-133. AMP-binding to gamma subunit also sustains activity by preventing dephosphorylation of Thr-133. ADP also stimulates Thr-133 phosphorylation, without stimulating already phosphorylated AMPK. ATP promotes dephosphorylation of Thr-133, rendering the enzyme inactive. Under physiological conditions AMPK mainly exists in its inactive form in complex with ATP, which is much more abundant than AMP. Selectively inhibited by compound C (6-[4-(2-Piperidin-1-yl-ethoxy)-phenyl)]-3-pyridin-4-yl-pyyrazolo[1,5-a] pyrimidine. Activated by resveratrol, a natural polyphenol present in red wine, and S17834, a synthetic polyphenol. In terms of biological role, catalytic subunit of AMP-activated protein kinase (AMPK), an energy sensor protein kinase that plays a key role in regulating cellular energy metabolism. In response to reduction of intracellular ATP levels, AMPK activates energy-producing pathways and inhibits energy-consuming processes: inhibits protein, carbohydrate and lipid biosynthesis, as well as cell growth and proliferation. AMPK acts via direct phosphorylation of metabolic enzymes, and by longer-term effects via phosphorylation of transcription regulators. Regulates lipid synthesis by phosphorylating and inactivating lipid metabolic enzymes such as ACACA, ACACB, GYS1, HMGCR and LIPE; regulates fatty acid and cholesterol synthesis by phosphorylating acetyl-CoA carboxylase (ACACA and ACACB) and hormone-sensitive lipase (LIPE) enzymes, respectively. Promotes lipolysis of lipid droplets by mediating phosphorylation of isoform 1 of CHKA (CHKalpha2). Regulates insulin-signaling and glycolysis by phosphorylating IRS1, PFKFB2 and PFKFB3. AMPK stimulates glucose uptake in muscle by increasing the translocation of the glucose transporter SLC2A4/GLUT4 to the plasma membrane, possibly by mediating phosphorylation of TBC1D4/AS160. Regulates transcription and chromatin structure by phosphorylating transcription regulators involved in energy metabolism such as CRTC2/TORC2, FOXO3, histone H2B, HDAC5, MEF2C, MLXIPL/ChREBP, EP300, HNF4A, p53/TP53, SREBF1, SREBF2 and PPARGC1A. Acts as a key regulator of glucose homeostasis in liver by phosphorylating CRTC2/TORC2, leading to CRTC2/TORC2 sequestration in the cytoplasm. In response to stress, phosphorylates 'Ser-36' of histone H2B (H2BS36ph), leading to promote transcription. Acts as a key regulator of cell growth and proliferation by phosphorylating FNIP1, TSC2, RPTOR, WDR24 and ATG1/ULK1: in response to nutrient limitation, negatively regulates the mTORC1 complex by phosphorylating RPTOR component of the mTORC1 complex and by phosphorylating and activating TSC2. Also phosphorylates and inhibits GATOR2 subunit WDR24 in response to nutrient limitation, leading to suppress glucose-mediated mTORC1 activation. In response to energetic stress, phosphorylates FNIP1, inactivating the non-canonical mTORC1 signaling, thereby promoting nuclear translocation of TFEB and TFE3, and inducing transcription of lysosomal or autophagy genes. In response to nutrient limitation, promotes autophagy by phosphorylating and activating ATG1/ULK1. In that process also activates WDR45/WIPI4. Phosphorylates CASP6, thereby preventing its autoprocessing and subsequent activation. In response to nutrient limitation, phosphorylates transcription factor FOXO3 promoting FOXO3 mitochondrial import. Also acts as a regulator of cellular polarity by remodeling the actin cytoskeleton; probably by indirectly activating myosin. AMPK also acts as a regulator of circadian rhythm by mediating phosphorylation of CRY1, leading to destabilize it. May regulate the Wnt signaling pathway by phosphorylating CTNNB1, leading to stabilize it. Also has tau-protein kinase activity: in response to amyloid beta A4 protein (APP) exposure, activated by CAMKK2, leading to phosphorylation of MAPT/TAU; however the relevance of such data remains unclear in vivo. Also phosphorylates CFTR, EEF2K, KLC1, NOS3 and SLC12A1. Regulates hepatic lipogenesis. Activated via SIRT3, represses sterol regulatory element-binding protein (SREBP) transcriptional activities and ATP-consuming lipogenesis to restore cellular energy balance. Upon stress, regulates mitochondrial fragmentation through phosphorylation of MTFR1L. In Sus scrofa (Pig), this protein is 5'-AMP-activated protein kinase catalytic subunit alpha-1 (PRKAA1).